The sequence spans 358 residues: Peptide chain release factor 1 (358 aa).

Gln-233 carries the post-translational modification N5-methylglutamine.

Belongs to the prokaryotic/mitochondrial release factor family. Methylated by PrmC. Methylation increases the termination efficiency of RF1.

It is found in the cytoplasm. Its function is as follows. Peptide chain release factor 1 directs the termination of translation in response to the peptide chain termination codons UAG and UAA. This Staphylococcus epidermidis (strain ATCC 35984 / DSM 28319 / BCRC 17069 / CCUG 31568 / BM 3577 / RP62A) protein is Peptide chain release factor 1.